Reading from the N-terminus, the 494-residue chain is Ammonium transporter Rh type C (494 aa).

The Cytoplasmic segment spans residues 1–22 (MGNFIQGCKDYFSQQKNTNIRL). The chain crosses the membrane as a helical span at residues 23-43 (TLPVVCFVWQIAMIILFGVFI). The Extracellular segment spans residues 44–74 (RYDEESDTHWVETKAHDNITSDIENDFYFRY). The N-linked (GlcNAc...) asparagine glycan is linked to Asn61. Residues 75-95 (PSFQDVHVMIFVGFGFLMTFL) form a helical membrane-spanning segment. Over 96–99 (KRYS) the chain is Cytoplasmic. The chain crosses the membrane as a helical span at residues 100–120 (FGAVGFNFLIASFGLQWALLM). The Extracellular portion of the chain corresponds to 121–133 (QGWFHSLDPQTGK). The helical transmembrane segment at 134–154 (IFIGVESLINADFCVAGCLIA) threads the bilayer. The Cytoplasmic segment spans residues 155-166 (YGAVLGKVSPVQ). The helical transmembrane segment at 167-187 (LLVMTLFGVTLFAVEEYIILN) threads the bilayer. Residues 188–194 (LLHARDA) lie on the Extracellular side of the membrane. The helical transmembrane segment at 195–215 (GGSMVIHTFGGYYGLTISWVL) threads the bilayer. Over 216–234 (YRPNLHQSKRMQGSVYHSD) the chain is Cytoplasmic. The chain crosses the membrane as a helical span at residues 235 to 255 (IFAMIGTLFLWMFWPSFNSAI). Topologically, residues 256–265 (TDHGDGQHRA) are extracellular. A helical membrane pass occupies residues 266–286 (VINTYLCLASTVLTTVAISSF). The Cytoplasmic segment spans residues 287–297 (SQKTGKLDMVH). A helical membrane pass occupies residues 298-318 (IQNSTLAGGVALGTAAEFMIS). Pro319 is a topological domain (extracellular). A helical membrane pass occupies residues 320 to 340 (YGALIVGFLCGIISTMGYIFI). Residues 341-358 (SPFLEKTLKIQDTCGIHN) are Cytoplasmic-facing. A helical transmembrane segment spans residues 359–379 (LHAMPGVIGGIVGAITAAAAS). Residues 380-411 (ESVYGKHALINTFDFTGDFKDRTVLTQGGYQA) lie on the Extracellular side of the membrane. Residues 412 to 432 (AGMCVSIVFGVAGGAIVGSIL) form a helical membrane-spanning segment. At 433–494 (KLPIWGDPAD…SNFSVEHCES (62 aa)) the chain is on the cytoplasmic side.

Belongs to the ammonium transporter (TC 2.A.49) family. Rh subfamily. Homotrimer.

It is found in the apical cell membrane. Functions as an ammonia transporter. May play a role in the elimination of ammonia in the gill. In Oncorhynchus mykiss (Rainbow trout), this protein is Ammonium transporter Rh type C (rhcg).